Here is a 448-residue protein sequence, read N- to C-terminus: Asparagine--tRNA ligase (448 aa).

This sequence belongs to the class-II aminoacyl-tRNA synthetase family. Homodimer.

Its subcellular location is the cytoplasm. The catalysed reaction is tRNA(Asn) + L-asparagine + ATP = L-asparaginyl-tRNA(Asn) + AMP + diphosphate + H(+). This Streptococcus thermophilus (strain ATCC BAA-491 / LMD-9) protein is Asparagine--tRNA ligase.